We begin with the raw amino-acid sequence, 71 residues long: UPF0346 protein BCE_2336 (71 aa).

The protein belongs to the UPF0346 family.

This is UPF0346 protein BCE_2336 from Bacillus cereus (strain ATCC 10987 / NRS 248).